A 68-amino-acid chain; its full sequence is Alpha-conotoxin-like Lp1.2 (68 aa).

A signal peptide spans M1–S21. Residues F22–R48 constitute a propeptide that is removed on maturation. 2 disulfides stabilise this stretch: C50–C56 and C51–C64. The interval S52 to P54 is ser-Xaa-Pro motif, crucial for potent interaction with nAChR. A Cysteine amide modification is found at C64. Positions G65–R68 are excised as a propeptide.

The protein belongs to the conotoxin A superfamily. In terms of tissue distribution, expressed by the venom duct.

Its subcellular location is the secreted. Its function is as follows. Alpha-conotoxins act on postsynaptic membranes, they bind to the nicotinic acetylcholine receptors (nAChR) and thus inhibit them. The chain is Alpha-conotoxin-like Lp1.2 from Conus leopardus (Leopard cone).